A 251-amino-acid chain; its full sequence is MILYEYPFNERIRTLLRLEDLFERFAFFLAQEDPREHHVALTTLFEIAEVTGRADLKSDLMKELERQRQTLAPFRGNPGIEQNALEAVLGEIEQTLANLAQMQGKTGQHLVDNEWLASIRSRAVIPGGTCKFDLPSYYAWQQWPAEQRRQDIAKWVAPLLPLRDAAAIVLRLARESGQASKVMAMQGSYQQMLSGRTYQLMQVRVPPELHVIPEASANKYMLWVRFTMQDGDVRPRAVDIDVPFHLTLCNL.

The protein belongs to the ZapD family. In terms of assembly, interacts with FtsZ.

Its subcellular location is the cytoplasm. Cell division factor that enhances FtsZ-ring assembly. Directly interacts with FtsZ and promotes bundling of FtsZ protofilaments, with a reduction in FtsZ GTPase activity. The sequence is that of Cell division protein ZapD from Burkholderia vietnamiensis (strain G4 / LMG 22486) (Burkholderia cepacia (strain R1808)).